Consider the following 347-residue polypeptide: tRNA N6-adenosine threonylcarbamoyltransferase (347 aa).

2 residues coordinate Fe cation: histidine 109 and histidine 113. Residues 136 to 140 (TVSGG), aspartate 169, glycine 182, aspartate 186, and asparagine 284 contribute to the substrate site. Fe cation is bound at residue aspartate 312.

It belongs to the KAE1 / TsaD family. Fe(2+) serves as cofactor.

The protein resides in the cytoplasm. It carries out the reaction L-threonylcarbamoyladenylate + adenosine(37) in tRNA = N(6)-L-threonylcarbamoyladenosine(37) in tRNA + AMP + H(+). In terms of biological role, required for the formation of a threonylcarbamoyl group on adenosine at position 37 (t(6)A37) in tRNAs that read codons beginning with adenine. Is involved in the transfer of the threonylcarbamoyl moiety of threonylcarbamoyl-AMP (TC-AMP) to the N6 group of A37, together with TsaE and TsaB. TsaD likely plays a direct catalytic role in this reaction. The chain is tRNA N6-adenosine threonylcarbamoyltransferase from Chlorobium phaeobacteroides (strain BS1).